The chain runs to 384 residues: Outer membrane protein assembly factor BamB (384 aa).

The N-terminal stretch at 1 to 16 is a signal peptide; it reads MKIRILVLILCALTQG. The N-palmitoyl cysteine moiety is linked to residue C17. The S-diacylglycerol cysteine moiety is linked to residue C17.

Belongs to the BamB family. In terms of assembly, part of the Bam complex.

Its subcellular location is the cell outer membrane. Its function is as follows. Part of the outer membrane protein assembly complex, which is involved in assembly and insertion of beta-barrel proteins into the outer membrane. This Legionella pneumophila (strain Paris) protein is Outer membrane protein assembly factor BamB.